We begin with the raw amino-acid sequence, 303 residues long: Glutaminase (303 aa).

Residues serine 61, asparagine 111, glutamate 155, asparagine 162, tyrosine 186, tyrosine 238, and valine 256 each contribute to the substrate site.

Belongs to the glutaminase family. In terms of assembly, homotetramer.

The catalysed reaction is L-glutamine + H2O = L-glutamate + NH4(+). The chain is Glutaminase from Marinomonas sp. (strain MWYL1).